The primary structure comprises 245 residues: 6-carboxyhexanoate--CoA ligase (245 aa).

The protein belongs to the BioW family. As to quaternary structure, homodimer. Mg(2+) serves as cofactor.

It catalyses the reaction heptanedioate + ATP + CoA = 6-carboxyhexanoyl-CoA + AMP + diphosphate. It functions in the pathway metabolic intermediate metabolism; pimeloyl-CoA biosynthesis; pimeloyl-CoA from pimelate: step 1/1. Functionally, catalyzes the transformation of pimelate into pimeloyl-CoA with concomitant hydrolysis of ATP to AMP. The chain is 6-carboxyhexanoate--CoA ligase from Sulfurihydrogenibium azorense (strain DSM 15241 / OCM 825 / Az-Fu1).